Consider the following 184-residue polypeptide: NADH-dependent flavin reductase subunit 2 (184 aa).

The protein belongs to the NADH-dependent flavin reductase family. In terms of assembly, requires LJ_0548 for activity, but the exact composition of the enzyme is unclear.

It catalyses the reaction a reduced flavin + NAD(+) = an oxidized flavin + NADH + 2 H(+). Functionally, component of an enzyme that catalyzes the reduction of free flavins (FMN, FAD and riboflavin) by NADH; the reduced flavins produced by this reaction likely spontaneously react with oxygen, yielding hydrogen peroxide. Is responsible for the major H(2)O(2) production in L.johnsonii in the presence of oxygen. Cannot use NADPH instead of NADH as the electron donor. This Lactobacillus johnsonii (strain CNCM I-12250 / La1 / NCC 533) protein is NADH-dependent flavin reductase subunit 2 (nfr2).